Reading from the N-terminus, the 362-residue chain is Chorismate synthase (362 aa).

NADP(+) is bound at residue R47. FMN contacts are provided by residues 124 to 126, G286, 301 to 305, and R327; these read RSS and KPTAT.

This sequence belongs to the chorismate synthase family. As to quaternary structure, homotetramer. FMNH2 serves as cofactor.

The enzyme catalyses 5-O-(1-carboxyvinyl)-3-phosphoshikimate = chorismate + phosphate. It functions in the pathway metabolic intermediate biosynthesis; chorismate biosynthesis; chorismate from D-erythrose 4-phosphate and phosphoenolpyruvate: step 7/7. In terms of biological role, catalyzes the anti-1,4-elimination of the C-3 phosphate and the C-6 proR hydrogen from 5-enolpyruvylshikimate-3-phosphate (EPSP) to yield chorismate, which is the branch point compound that serves as the starting substrate for the three terminal pathways of aromatic amino acid biosynthesis. This reaction introduces a second double bond into the aromatic ring system. In Rippkaea orientalis (strain PCC 8801 / RF-1) (Cyanothece sp. (strain PCC 8801)), this protein is Chorismate synthase.